The sequence spans 1486 residues: Chromosome partition protein MukB (1486 aa).

Residue 34–41 coordinates ATP; it reads GGNGAGKS. Coiled-coil stretches lie at residues 326 to 418, 444 to 480, and 509 to 603; these read LEAD…QYNQ, LETF…QAYQ, and RHLA…RAPV. The segment at 666-783 is flexible hinge; the sequence is PGGSEDQRLN…EVPLFGRAAR (118 aa). Coiled-coil stretches lie at residues 835–923, 977–1115, and 1209–1266; these read EAEI…AKLE, EMLS…TAKA, and VEAI…QNVS.

Belongs to the SMC family. MukB subfamily. Homodimerization via its hinge domain. Binds to DNA via its C-terminal region. Interacts, and probably forms a ternary complex, with MukE and MukF via its C-terminal region. The complex formation is stimulated by calcium or magnesium. Interacts with tubulin-related protein FtsZ.

The protein localises to the cytoplasm. It is found in the nucleoid. Its function is as follows. Plays a central role in chromosome condensation, segregation and cell cycle progression. Functions as a homodimer, which is essential for chromosome partition. Involved in negative DNA supercoiling in vivo, and by this means organize and compact chromosomes. May achieve or facilitate chromosome segregation by condensation DNA from both sides of a centrally located replisome during cell division. The protein is Chromosome partition protein MukB of Escherichia fergusonii (strain ATCC 35469 / DSM 13698 / CCUG 18766 / IAM 14443 / JCM 21226 / LMG 7866 / NBRC 102419 / NCTC 12128 / CDC 0568-73).